The chain runs to 589 residues: Arginine--tRNA ligase (589 aa).

The short motif at Ala123–His133 is the 'HIGH' region element.

This sequence belongs to the class-I aminoacyl-tRNA synthetase family. As to quaternary structure, monomer.

It localises to the cytoplasm. The enzyme catalyses tRNA(Arg) + L-arginine + ATP = L-arginyl-tRNA(Arg) + AMP + diphosphate. The sequence is that of Arginine--tRNA ligase from Hyphomonas neptunium (strain ATCC 15444).